The following is a 349-amino-acid chain: Phosphate acetyltransferase (349 aa).

Belongs to the phosphate acetyltransferase and butyryltransferase family.

The protein resides in the cytoplasm. The catalysed reaction is acetyl-CoA + phosphate = acetyl phosphate + CoA. It functions in the pathway metabolic intermediate biosynthesis; acetyl-CoA biosynthesis; acetyl-CoA from acetate: step 2/2. The chain is Phosphate acetyltransferase (pta) from Rickettsia typhi (strain ATCC VR-144 / Wilmington).